We begin with the raw amino-acid sequence, 328 residues long: 5,10-methylenetetrahydromethanopterin reductase (328 aa).

Belongs to the mer family.

The protein localises to the cytoplasm. The enzyme catalyses 5-methyl-5,6,7,8-tetrahydromethanopterin + oxidized coenzyme F420-(gamma-L-Glu)(n) + H(+) = 5,10-methylenetetrahydromethanopterin + reduced coenzyme F420-(gamma-L-Glu)(n). It functions in the pathway one-carbon metabolism; methanogenesis from CO(2); methyl-coenzyme M from 5,10-methylene-5,6,7,8-tetrahydromethanopterin: step 1/2. In terms of biological role, catalyzes the reversible reduction of methylene-H(4)MPT to methyl-H(4)MPT. The chain is 5,10-methylenetetrahydromethanopterin reductase from Methanosarcina barkeri (strain Fusaro / DSM 804).